Reading from the N-terminus, the 319-residue chain is Putative olfactory receptor 52L2 (319 aa).

At 1 to 43 (MNLDSFFSFLLKSLIMALSNSSWRLPQPSFFLVGIPGLEESQH) the chain is on the extracellular side. A glycan (N-linked (GlcNAc...) asparagine) is linked at asparagine 20. The chain crosses the membrane as a helical span at residues 44–64 (WIALPLGILYLLALVGNVTIL). Topologically, residues 65 to 72 (FIIWMDPS) are cytoplasmic. A helical membrane pass occupies residues 73–93 (LHQSMYLFLSMLAAIDLVVAS). Residues 94–117 (STAPKALAVLLVRAQEIGYTVCLI) are Extracellular-facing. Cysteine 115 and cysteine 207 form a disulfide bridge. The chain crosses the membrane as a helical span at residues 118-138 (QMFFTHAFSSMESGVLVAMAL). Over 139-157 (DRYVAICHPLHHSTILHPG) the chain is Cytoplasmic. The helical transmembrane segment at 158 to 178 (VIGHIGMVVLVRGLLLLIPFL) threads the bilayer. Residues 179-214 (ILLRKLIFCQATIIGHAYCEHMAVVKLACSETTVNR) are Extracellular-facing. Residues 215–235 (AYGLTVALLVVGLDVLAIGVS) traverse the membrane as a helical segment. Topologically, residues 236–255 (YAHILQAVLKVPGNEARLKA) are cytoplasmic. Residues 256-276 (FSTCGSHVCVILVFYIPGMFS) form a helical membrane-spanning segment. Residues 277–291 (FLTHRFGHHVPHHVH) lie on the Extracellular side of the membrane. Residues 292 to 312 (VLLAILYRLVPPALNPLVYRV) form a helical membrane-spanning segment. The Cytoplasmic portion of the chain corresponds to 313 to 319 (KTQKIHQ).

It belongs to the G-protein coupled receptor 1 family.

It is found in the cell membrane. Functionally, odorant receptor. The polypeptide is Putative olfactory receptor 52L2 (OR52L2P) (Homo sapiens (Human)).